The primary structure comprises 271 residues: Nuclear egress protein 2 (271 aa).

The Perinuclear space portion of the chain corresponds to 1–249; it reads MSVVGKRVVD…LGRAVALVRR (249 aa). Residues 250–267 traverse the membrane as a helical segment; the sequence is SWPWISAGIAFLCLGLVW. Residues 268–271 lie on the Nuclear side of the membrane; sequence MRPS.

The protein belongs to the herpesviridae NEC2 protein family. Forms a heterohexameric complex with NEC1. In terms of processing, phosphorylated.

The protein localises to the host nucleus inner membrane. Functionally, plays an essential role in virion nuclear egress, the first step of virion release from infected cell. Within the host nucleus, NEC1 interacts with the newly formed capsid through the vertexes and directs it to the inner nuclear membrane by associating with NEC2. Induces the budding of the capsid at the inner nuclear membrane as well as its envelopment into the perinuclear space. There, the NEC1/NEC2 complex promotes the fusion of the enveloped capsid with the outer nuclear membrane and the subsequent release of the viral capsid into the cytoplasm where it will reach the secondary budding sites in the host Golgi or trans-Golgi network. The polypeptide is Nuclear egress protein 2 (Homo sapiens (Human)).